We begin with the raw amino-acid sequence, 620 residues long: MRDIVFVSPQLYLSSQEGWKSDSAKSGFIPILKNDLQRFQDSLKHIVDARNSLSETLLNSKDDGSIHNSDQNTGLNKDKEASIADNNSANKCATSSSRYQELKQFLPISLDQQIHTVSLQGVSSSFSRGQIESLLDHCLNLALTETQSNSALKVEAWSSFSSFLDTQDIFIRFSKVDEDEAFVNTLNYCKALFAFIRKLHEDFKIELHLDLNTKEYVEDRTGTIPSVKPEKASEFYSVFKNIEDQTDERNSKKEQLDDSSTQYKVDTNTLSDLPSDALDQLCKDIIEFRTKVVSIEKEKKMKSTYEESRRQRHQMQKVFDQIRKNHSGAKGSANTEEEDTNMEDEDEEDDTEDDLALEKRKEERDLEESNRRYEDMLHQLHSNTEPKIKSIRADIMSAENYEEHLEKNRSLYLKELLHLANDVHYDHHRSFKEQEERRDEEDRAKNGNAKELAPIQLSDGKAISAGKAAAITLPEGTVKSENYNADKNVSESSEHVKIKFDFKKAIDHSVESSSEDEGYRESELPPTKPSERSAAEDRLPFTADELNIRLTNLKESRYVDELVREFLGVYEDELVEYILENIRVNQSKQALLNELRETFDEDGETIADRLWSRKEFRLGT.

Disordered stretches follow at residues 58-82 (LNSK…KEAS), 246-270 (TDER…TNTL), 323-373 (RKNH…NRRY), 428-452 (HRSF…AKEL), and 509-537 (SVES…AAED). The span at 66 to 75 (IHNSDQNTGL) shows a compositional bias: polar residues. Residues 246 to 256 (TDERNSKKEQL) show a composition bias toward basic and acidic residues. The span at 258–270 (DSSTQYKVDTNTL) shows a compositional bias: polar residues. A coiled-coil region spans residues 296 to 385 (EKEKKMKSTY…MLHQLHSNTE (90 aa)). Acidic residues predominate over residues 335–355 (TEEEDTNMEDEDEEDDTEDDL). Composition is skewed to basic and acidic residues over residues 356–373 (ALEK…NRRY) and 431–445 (FKEQ…DRAK). A phosphoserine mark is found at Ser512 and Ser514. Basic and acidic residues predominate over residues 517–537 (EGYRESELPPTKPSERSAAED).

The protein belongs to the SNU71 family. As to quaternary structure, component of the U1 snRNP particle, a subcomplex of the spliceosome.

Its subcellular location is the cytoplasm. The protein resides in the nucleus. Its function is as follows. Component of the U1 snRNP particle, which recognizes and binds the 5'-splice site of pre-mRNA. Together with other non-snRNP factors, U1 snRNP forms the spliceosomal commitment complex, that targets pre-mRNA to the splicing pathway. The sequence is that of U1 small nuclear ribonucleoprotein component SNU71 (SNU71) from Saccharomyces cerevisiae (strain YJM789) (Baker's yeast).